The following is a 381-amino-acid chain: Erythronate-4-phosphate dehydrogenase (381 aa).

Substrate-binding residues include serine 45 and threonine 66. NAD(+) contacts are provided by aspartate 146 and threonine 173. Arginine 206 is an active-site residue. An NAD(+)-binding site is contributed by aspartate 230. Glutamate 235 is an active-site residue. The Proton donor role is filled by histidine 252. Glycine 255 lines the NAD(+) pocket. Tyrosine 256 is a substrate binding site.

This sequence belongs to the D-isomer specific 2-hydroxyacid dehydrogenase family. PdxB subfamily. As to quaternary structure, homodimer.

Its subcellular location is the cytoplasm. It catalyses the reaction 4-phospho-D-erythronate + NAD(+) = (R)-3-hydroxy-2-oxo-4-phosphooxybutanoate + NADH + H(+). The protein operates within cofactor biosynthesis; pyridoxine 5'-phosphate biosynthesis; pyridoxine 5'-phosphate from D-erythrose 4-phosphate: step 2/5. Catalyzes the oxidation of erythronate-4-phosphate to 3-hydroxy-2-oxo-4-phosphonooxybutanoate. The sequence is that of Erythronate-4-phosphate dehydrogenase from Hahella chejuensis (strain KCTC 2396).